We begin with the raw amino-acid sequence, 428 residues long: Sorting nexin-31 (428 aa).

Residues 1–107 (MHICIPVTEE…EYFKKLQMDT (107 aa)) form the PX domain.

Belongs to the sorting nexin family.

May be involved in protein trafficking. The polypeptide is Sorting nexin-31 (snx31) (Xenopus tropicalis (Western clawed frog)).